A 201-amino-acid chain; its full sequence is Small ribosomal subunit protein uS4c (201 aa).

A disordered region spans residues 16–43 (GALPGLTSKKPRSASDLRNQSRSGKRSQ). Residues 89-169 (MRLDNILFRL…LPKHLTLHSF (81 aa)) form the S4 RNA-binding domain.

It belongs to the universal ribosomal protein uS4 family. In terms of assembly, part of the 30S ribosomal subunit. Contacts protein S5. The interaction surface between S4 and S5 is involved in control of translational fidelity.

The protein localises to the plastid. Its subcellular location is the chloroplast. One of the primary rRNA binding proteins, it binds directly to 16S rRNA where it nucleates assembly of the body of the 30S subunit. In terms of biological role, with S5 and S12 plays an important role in translational accuracy. The sequence is that of Small ribosomal subunit protein uS4c (rps4) from Nymphaea alba (White water-lily).